We begin with the raw amino-acid sequence, 628 residues long: Very-long-chain aldehyde decarbonylase GL1-2 (628 aa).

5 helical membrane-spanning segments follow: residues 37–57 (GAAP…ARGL), 131–151 (GWAI…YWAH), 191–211 (VVIG…VGLV), 299–319 (DFVF…PFVL), and 331–351 (FVLL…WCCS). The 141-residue stretch at 137–277 (LLHVLVAEPL…MPIFDLLGGT (141 aa)) folds into the Fatty acid hydroxylase domain.

Belongs to the sterol desaturase family. In terms of assembly, homodimer. As to expression, expressed in germinating seeds, radicals and leaves.

It localises to the endoplasmic reticulum membrane. The enzyme catalyses a long-chain fatty aldehyde + 2 NADPH + O2 + H(+) = a long-chain alkane + formate + 2 NADP(+) + H2O. Aldehyde decarbonylase involved in the conversion of aldehydes to alkanes. Core component of a very-long-chain alkane synthesis complex. Required for the formation of wax layers conferring cuticular permeability and drought tolerance. The sequence is that of Very-long-chain aldehyde decarbonylase GL1-2 from Oryza sativa subsp. japonica (Rice).